The following is a 484-amino-acid chain: Cholesterol 22-hydroxylase CYP90B27 (484 aa).

Residues 2-22 (ALELILVLSSLIVILIIFFSF) traverse the membrane as a helical segment. C429 serves as a coordination point for heme.

The protein belongs to the cytochrome P450 family. Expressed in roots.

Its subcellular location is the membrane. It carries out the reaction cholesterol + reduced [NADPH--hemoprotein reductase] + O2 = (22R)-hydroxycholesterol + oxidized [NADPH--hemoprotein reductase] + H2O + H(+). It functions in the pathway steroid metabolism; cholesterol metabolism. Involved in the biosynthesis of steroidal saponins and alkaloids natural products from cholesterol such as spirostane-type saponins and polyphyllins, compounds with pharmacological activity. Catalyzes the C-22 hydroxylation of cholesterol to form 22R-hydroxycholesterol. In Paris polyphylla (Daiswa polyphylla), this protein is Cholesterol 22-hydroxylase CYP90B27.